We begin with the raw amino-acid sequence, 100 residues long: Large ribosomal subunit protein uL23 (100 aa).

It belongs to the universal ribosomal protein uL23 family. In terms of assembly, part of the 50S ribosomal subunit. Contacts protein L29, and trigger factor when it is bound to the ribosome.

One of the early assembly proteins it binds 23S rRNA. One of the proteins that surrounds the polypeptide exit tunnel on the outside of the ribosome. Forms the main docking site for trigger factor binding to the ribosome. This is Large ribosomal subunit protein uL23 from Shewanella denitrificans (strain OS217 / ATCC BAA-1090 / DSM 15013).